Here is a 782-residue protein sequence, read N- to C-terminus: Sulfate permease family protein 3 (782 aa).

The next 12 membrane-spanning stretches (helical) occupy residues 30-52 (YACSPSKCIHSLLSFLPIITWLP), 64-84 (LSGGLTMAVFSVPQGIALASI), 86-106 (GVPPVYGLYTAIFPSFLYIFF), 113-133 (ALGGFAVLSLMTHGAIEKVML), 196-216 (IHVATTIIFLAGVIQVFMGVF), 232-252 (GFVVGGGIHVFFAQIGNMLGI), 274-294 (LDNVHIPTVCISLSSFLFLVF), 302-322 (WLNSAFNYPVPFELVLVVVGI), 359-379 (HIGLNAAAIAITAVAIHITVA), 398-418 (ALGFVGVLSSFFPVFPVTSGF), 433-453 (LTCLFSSLALLSVILCIGPAL), and 497-517 (FFLTVCYDMGEGLLMAIGFAV). One can recognise an STAS domain in the interval 546–700 (KRDLERIQGN…NKVGDAVKAA (155 aa)). Residues 728–742 (IDEESSDSNDNDDAE) show a composition bias toward acidic residues. Residues 728-782 (IDEESSDSNDNDDAEIQERITEESENSEEVMSETSVSIEDATSLTSSRNSINSEE) are disordered. Positions 767–782 (DATSLTSSRNSINSEE) are enriched in polar residues.

Belongs to the SLC26A/SulP transporter (TC 2.A.53) family.

Its subcellular location is the membrane. Possible sulfate transporter. In Caenorhabditis elegans, this protein is Sulfate permease family protein 3 (sulp-3).